Consider the following 415-residue polypeptide: N-succinylarginine dihydrolase (415 aa).

Residues 18–27 (AGLSRGNIAS), Asn-100, and 127–128 (HR) contribute to the substrate site. The active site involves Glu-161. Arg-193 is a binding site for substrate. His-229 is a catalytic residue. Substrate contacts are provided by Asp-231 and Asn-340. Cys-346 functions as the Nucleophile in the catalytic mechanism.

Belongs to the succinylarginine dihydrolase family. In terms of assembly, homodimer.

It catalyses the reaction N(2)-succinyl-L-arginine + 2 H2O + 2 H(+) = N(2)-succinyl-L-ornithine + 2 NH4(+) + CO2. It functions in the pathway amino-acid degradation; L-arginine degradation via AST pathway; L-glutamate and succinate from L-arginine: step 2/5. Catalyzes the hydrolysis of N(2)-succinylarginine into N(2)-succinylornithine, ammonia and CO(2). The sequence is that of N-succinylarginine dihydrolase from Sphingopyxis alaskensis (strain DSM 13593 / LMG 18877 / RB2256) (Sphingomonas alaskensis).